We begin with the raw amino-acid sequence, 501 residues long: Cytochrome P450 71B23 (501 aa).

A helical transmembrane segment spans residues Met-1–Thr-21. Cys-443 is a heme binding site.

This sequence belongs to the cytochrome P450 family. Heme is required as a cofactor.

It localises to the membrane. The protein is Cytochrome P450 71B23 (CYP71B23) of Arabidopsis thaliana (Mouse-ear cress).